The primary structure comprises 276 residues: WIMGHMVNAIYQIDEFVDLGANSIEVDVSFDDNAKPEYTYHGIPCDCRRWCTKWEYFNDFLKALRKATTPGDSKYHEKLVLVVFDLKTNSLYNYQAYDAGKKLAENLLQHYWNNGNNGGRAYIVLSIPNLAHYQLITGFKETLKNKGHPELMDKVGHDFSGNDNIDQVEKAYKKAGVTGHVWQSDGITNCIASFIRGLDRAKKAVKNRDSSNGYINKVYYWTVDKYATTREALDIGVDGIMTNYPDVIANVLNESAYKEKFRLATYDDNPWEAFKN.

His-5 is a catalytic residue. Glu-25 and Asp-27 together coordinate Mg(2+). His-41 functions as the Nucleophile in the catalytic mechanism. 2 disulfides stabilise this stretch: Cys-45/Cys-51 and Cys-47/Cys-190. Asp-85 is a binding site for Mg(2+). Asn-253 is a glycosylation site (N-linked (GlcNAc...) asparagine).

This sequence belongs to the arthropod phospholipase D family. Class II subfamily. Requires Mg(2+) as cofactor. In terms of tissue distribution, expressed by the venom gland.

It localises to the secreted. It catalyses the reaction an N-(acyl)-sphingosylphosphocholine = an N-(acyl)-sphingosyl-1,3-cyclic phosphate + choline. The enzyme catalyses an N-(acyl)-sphingosylphosphoethanolamine = an N-(acyl)-sphingosyl-1,3-cyclic phosphate + ethanolamine. It carries out the reaction a 1-acyl-sn-glycero-3-phosphocholine = a 1-acyl-sn-glycero-2,3-cyclic phosphate + choline. The catalysed reaction is a 1-acyl-sn-glycero-3-phosphoethanolamine = a 1-acyl-sn-glycero-2,3-cyclic phosphate + ethanolamine. Functionally, dermonecrotic toxins cleave the phosphodiester linkage between the phosphate and headgroup of certain phospholipids (sphingolipid and lysolipid substrates), forming an alcohol (often choline) and a cyclic phosphate. This toxin acts on sphingomyelin (SM). It may also act on ceramide phosphoethanolamine (CPE), lysophosphatidylcholine (LPC) and lysophosphatidylethanolamine (LPE), but not on lysophosphatidylserine (LPS), and lysophosphatidylglycerol (LPG). It acts by transphosphatidylation, releasing exclusively cyclic phosphate products as second products. Induces dermonecrosis, hemolysis, increased vascular permeability, edema, inflammatory response, and platelet aggregation. The chain is Dermonecrotic toxin LarSicTox-alphaIB2c from Loxosceles arizonica (Arizona brown spider).